A 288-amino-acid chain; its full sequence is 4-diphosphocytidyl-2-C-methyl-D-erythritol kinase (288 aa).

Lys8 is an active-site residue. 90 to 100 lines the ATP pocket; that stretch reads PVGAGLAGGSS. Asp132 is an active-site residue.

The protein belongs to the GHMP kinase family. IspE subfamily.

It catalyses the reaction 4-CDP-2-C-methyl-D-erythritol + ATP = 4-CDP-2-C-methyl-D-erythritol 2-phosphate + ADP + H(+). It functions in the pathway isoprenoid biosynthesis; isopentenyl diphosphate biosynthesis via DXP pathway; isopentenyl diphosphate from 1-deoxy-D-xylulose 5-phosphate: step 3/6. Catalyzes the phosphorylation of the position 2 hydroxy group of 4-diphosphocytidyl-2C-methyl-D-erythritol. This is 4-diphosphocytidyl-2-C-methyl-D-erythritol kinase from Chlamydia trachomatis serovar A (strain ATCC VR-571B / DSM 19440 / HAR-13).